The following is a 256-amino-acid chain: Deoxyribose-phosphate aldolase (256 aa).

Residue aspartate 102 is the Proton donor/acceptor of the active site. Catalysis depends on lysine 165, which acts as the Schiff-base intermediate with acetaldehyde. Lysine 197 functions as the Proton donor/acceptor in the catalytic mechanism.

It belongs to the DeoC/FbaB aldolase family. DeoC type 2 subfamily.

It is found in the cytoplasm. It catalyses the reaction 2-deoxy-D-ribose 5-phosphate = D-glyceraldehyde 3-phosphate + acetaldehyde. It functions in the pathway carbohydrate degradation; 2-deoxy-D-ribose 1-phosphate degradation; D-glyceraldehyde 3-phosphate and acetaldehyde from 2-deoxy-alpha-D-ribose 1-phosphate: step 2/2. Functionally, catalyzes a reversible aldol reaction between acetaldehyde and D-glyceraldehyde 3-phosphate to generate 2-deoxy-D-ribose 5-phosphate. The polypeptide is Deoxyribose-phosphate aldolase (Shewanella oneidensis (strain ATCC 700550 / JCM 31522 / CIP 106686 / LMG 19005 / NCIMB 14063 / MR-1)).